Consider the following 899-residue polypeptide: Probable disease resistance protein RXW24L (899 aa).

A coiled-coil region spans residues 13–50 (DRLSQEYDQFKGVEDQVTELKSNLNLLKSFLKDADAKK). Residues 143–455 (LQERQREMRH…AEGISERRRY (313 aa)) enclose the NB-ARC domain. Position 189–196 (189–196 (GMGGLGKT)) interacts with ATP.

The protein belongs to the disease resistance NB-LRR family.

In terms of biological role, potential disease resistance protein. The chain is Probable disease resistance protein RXW24L (RXW24L) from Arabidopsis thaliana (Mouse-ear cress).